A 427-amino-acid polypeptide reads, in one-letter code: Putative acyl-CoA thioester hydrolase YbhC (427 aa).

Residues 1–21 form the signal peptide; sequence MNTFSVSRLALALAFGVTLTA. Residue C22 is the site of N-palmitoyl cysteine attachment. A lipid anchor (S-diacylglycerol cysteine) is attached at C22. The interval 23–42 is disordered; sequence SSTPPDQRPSDQTAPGTSSR. C185 and C197 form a disulfide bridge. Catalysis depends on D285, which acts as the Nucleophile. R345 provides a ligand contact to substrate.

The protein belongs to the pectinesterase family.

Its subcellular location is the cell outer membrane. In terms of biological role, putative thioesterase. Does not bind pectin, and has no pectinesterase activity. The polypeptide is Putative acyl-CoA thioester hydrolase YbhC (ybhC) (Escherichia coli (strain K12)).